A 190-amino-acid polypeptide reads, in one-letter code: Large ribosomal subunit protein bL25 (190 aa).

It belongs to the bacterial ribosomal protein bL25 family. CTC subfamily. As to quaternary structure, part of the 50S ribosomal subunit; part of the 5S rRNA/L5/L18/L25 subcomplex. Contacts the 5S rRNA. Binds to the 5S rRNA independently of L5 and L18.

In terms of biological role, this is one of the proteins that binds to the 5S RNA in the ribosome where it forms part of the central protuberance. This chain is Large ribosomal subunit protein bL25, found in Neisseria gonorrhoeae (strain ATCC 700825 / FA 1090).